A 115-amino-acid polypeptide reads, in one-letter code: Large ribosomal subunit protein bL20 (115 aa).

This sequence belongs to the bacterial ribosomal protein bL20 family.

Binds directly to 23S ribosomal RNA and is necessary for the in vitro assembly process of the 50S ribosomal subunit. It is not involved in the protein synthesizing functions of that subunit. This is Large ribosomal subunit protein bL20 from Borrelia turicatae (strain 91E135).